The sequence spans 643 residues: Probable extracellular metalloproteinase 4 (643 aa).

A signal peptide spans 1–18; that stretch reads MHGLLLAGLLALPLNVFA. The propeptide occupies 19–254; sequence HPTESHSSGV…VHSVVDYVSA (236 aa). The segment at 49–69 is disordered; it reads SDAVPKQDGESFTTSSTGDDN. Polar residues predominate over residues 58-69; it reads ESFTTSSTGDDN. N271 and N420 each carry an N-linked (GlcNAc...) asparagine glycan. H437 contributes to the Zn(2+) binding site. Residue E438 is part of the active site. H441 is a Zn(2+) binding site. N603 and N629 each carry an N-linked (GlcNAc...) asparagine glycan.

This sequence belongs to the peptidase M36 family. Zn(2+) is required as a cofactor.

It localises to the secreted. Its function is as follows. Secreted metalloproteinase probably acting as a virulence factor. The chain is Probable extracellular metalloproteinase 4 (MEP4) from Trichophyton verrucosum (strain HKI 0517).